Consider the following 61-residue polypeptide: Large ribosomal subunit protein uL30 (61 aa).

This sequence belongs to the universal ribosomal protein uL30 family. As to quaternary structure, part of the 50S ribosomal subunit.

The chain is Large ribosomal subunit protein uL30 from Lacticaseibacillus casei (strain BL23) (Lactobacillus casei).